The chain runs to 661 residues: UvrABC system protein B (661 aa).

Residues Ala-25 to Arg-182 enclose the Helicase ATP-binding domain. ATP is bound at residue Gly-38–Thr-45. The Beta-hairpin signature appears at Tyr-91 to Ile-114. Positions Gln-430–Ile-592 constitute a Helicase C-terminal domain. Residues Lys-621–Ala-656 form the UVR domain.

It belongs to the UvrB family. In terms of assembly, forms a heterotetramer with UvrA during the search for lesions. Interacts with UvrC in an incision complex.

It localises to the cytoplasm. In terms of biological role, the UvrABC repair system catalyzes the recognition and processing of DNA lesions. A damage recognition complex composed of 2 UvrA and 2 UvrB subunits scans DNA for abnormalities. Upon binding of the UvrA(2)B(2) complex to a putative damaged site, the DNA wraps around one UvrB monomer. DNA wrap is dependent on ATP binding by UvrB and probably causes local melting of the DNA helix, facilitating insertion of UvrB beta-hairpin between the DNA strands. Then UvrB probes one DNA strand for the presence of a lesion. If a lesion is found the UvrA subunits dissociate and the UvrB-DNA preincision complex is formed. This complex is subsequently bound by UvrC and the second UvrB is released. If no lesion is found, the DNA wraps around the other UvrB subunit that will check the other stand for damage. This chain is UvrABC system protein B, found in Rickettsia canadensis (strain McKiel).